The following is a 513-amino-acid chain: GMP synthase [glutamine-hydrolyzing] (513 aa).

Positions 3-192 (TVVVLDYGSQ…VSKIAKMEKN (190 aa)) constitute a Glutamine amidotransferase type-1 domain. C80 (nucleophile) is an active-site residue. Active-site residues include H166 and E168. A GMPS ATP-PPase domain is found at 193 to 388 (WEMKDFVSEK…LELPQSMINR (196 aa)). 220–226 (SGGVDSS) contacts ATP.

In terms of assembly, homodimer.

It catalyses the reaction XMP + L-glutamine + ATP + H2O = GMP + L-glutamate + AMP + diphosphate + 2 H(+). It participates in purine metabolism; GMP biosynthesis; GMP from XMP (L-Gln route): step 1/1. Its function is as follows. Catalyzes the synthesis of GMP from XMP. The polypeptide is GMP synthase [glutamine-hydrolyzing] (Thermosipho melanesiensis (strain DSM 12029 / CIP 104789 / BI429)).